Reading from the N-terminus, the 471-residue chain is Ribulose bisphosphate carboxylase large chain (471 aa).

Substrate is bound by residues N115 and T165. The Proton acceptor role is filled by K167. K169 is a binding site for substrate. Positions 193, 195, and 196 each coordinate Mg(2+). The residue at position 193 (K193) is an N6-carboxylysine. The active-site Proton acceptor is H286. Residues R287, H319, and S371 each coordinate substrate.

The protein belongs to the RuBisCO large chain family. Type I subfamily. As to quaternary structure, heterohexadecamer of 8 large chains and 8 small chains. It depends on Mg(2+) as a cofactor.

It carries out the reaction 2 (2R)-3-phosphoglycerate + 2 H(+) = D-ribulose 1,5-bisphosphate + CO2 + H2O. The enzyme catalyses D-ribulose 1,5-bisphosphate + O2 = 2-phosphoglycolate + (2R)-3-phosphoglycerate + 2 H(+). In terms of biological role, ruBisCO catalyzes two reactions: the carboxylation of D-ribulose 1,5-bisphosphate, the primary event in carbon dioxide fixation, as well as the oxidative fragmentation of the pentose substrate. Both reactions occur simultaneously and in competition at the same active site. The sequence is that of Ribulose bisphosphate carboxylase large chain from Alvinoconcha hessleri symbiotic bacterium.